We begin with the raw amino-acid sequence, 662 residues long: MHRASANSPLNSVSGSMMWRNQSSGRRPSKRLSDNEATLSTINSILGAEDMLSKNLLSYLPPNNEEIDMIYPSEQIMTFIEMLHGHKNFFKGQTIHNALRDSAVLKKQIAYGVAQALLNSVSIQQIHDEWKRHVRSFPFHNKKLSFQDYFSVWAHAIKQVILGDISNIINFILQSIDNSHYNRYVDWICTVGIVPFMRTTPTAPNLYNLLQQVSSKLIHDIVRHKQNIVTPILLGLSSVIIPDFHNIKIFRDRNSEQISCFKNKKAIAFFTYSTPYVIRNRLMLTTPLAHLSPELKKHNSLRRHQKMCQLLNTFPIKVLTAAKTDVTNKKIMDMIEKEEKNSDAKKSLIKFLLNLSDSKSKIGIRDSVEGFIQEITPSIIDQNKLMLNRGQFRKRSAIDTGERDVRDLFKKQIIKCMEEQIQTQMDEIETLKTTNQMFERKIKDLHSLLETNNDCDRYNPDLDHDLENLSLSRALNIVQRLPFTSVSIDDTRSVANSFFSQYIPDTQYADKRIDQLWEMEYMRTFRLRKNVNNQGQEESITYSNYSIELLIVPFLRRLLNIYNLESIPEEFLFLSLGEILLAIYESSKIKHYLRLVYVRELNQISEVYNLTQTHPENNEPIFDSNIFSPNPENEILEKIKRIRNLRRIQHLTRPNYPKGDQD.

Over residues 1–26 (MHRASANSPLNSVSGSMMWRNQSSGR) the composition is skewed to polar residues. The tract at residues 1-35 (MHRASANSPLNSVSGSMMWRNQSSGRRPSKRLSDN) is disordered.

This sequence belongs to the herpesviridae portal protein family. Homododecamerizes. Interacts with terminase subunits TRM1 and TRM3.

It is found in the virion. The protein localises to the host nucleus. Its function is as follows. Forms a portal in the viral capsid through which viral DNA is translocated during DNA packaging. Assembles as a dodecamer at a single fivefold axe of the T=16 icosahedric capsid. Binds to the molecular motor that translocates the viral DNA, termed terminase. The sequence is that of Portal protein (U76) from Human herpesvirus 6B (strain Z29) (HHV-6 variant B).